Reading from the N-terminus, the 888-residue chain is DNA mismatch repair protein MutS (888 aa).

Residues 249–271 form a disordered region; sequence IGQRPPLSPPSREASGSTMAIDP. 638–645 provides a ligand contact to ATP; it reads GPNMAGKS.

Belongs to the DNA mismatch repair MutS family.

Functionally, this protein is involved in the repair of mismatches in DNA. It is possible that it carries out the mismatch recognition step. This protein has a weak ATPase activity. This is DNA mismatch repair protein MutS from Nitrobacter winogradskyi (strain ATCC 25391 / DSM 10237 / CIP 104748 / NCIMB 11846 / Nb-255).